The chain runs to 288 residues: Nucleotide-binding protein APP7_0339 (288 aa).

Position 8–15 (8–15 (GRSGSGKS)) interacts with ATP. Residue 56 to 59 (DIRN) coordinates GTP.

Belongs to the RapZ-like family.

Displays ATPase and GTPase activities. The chain is Nucleotide-binding protein APP7_0339 from Actinobacillus pleuropneumoniae serotype 7 (strain AP76).